A 301-amino-acid polypeptide reads, in one-letter code: Homoserine O-acetyltransferase (301 aa).

Cys142 acts as the Acyl-thioester intermediate in catalysis. Substrate-binding residues include Lys163 and Ser192. The Proton acceptor role is filled by His235. Residue Glu237 is part of the active site. Arg249 lines the substrate pocket.

Belongs to the MetA family.

It localises to the cytoplasm. The catalysed reaction is L-homoserine + acetyl-CoA = O-acetyl-L-homoserine + CoA. The protein operates within amino-acid biosynthesis; L-methionine biosynthesis via de novo pathway; O-acetyl-L-homoserine from L-homoserine: step 1/1. Its function is as follows. Transfers an acetyl group from acetyl-CoA to L-homoserine, forming acetyl-L-homoserine. This Bacillus cereus (strain 03BB102) protein is Homoserine O-acetyltransferase.